Reading from the N-terminus, the 385-residue chain is Bifunctional chorismate mutase/prephenate dehydratase (385 aa).

The Chorismate mutase domain maps to 1–92 (MPANNSLLIF…ESVATQKKLL (92 aa)). Substrate is bound by residues R11, R28, K39, D48, E52, S84, and Q88. Residues 105–285 (NFSFLGPKGS…NITRFILLNR (181 aa)) form the Prephenate dehydratase domain. The interval 286–385 (NPKKISKNIP…PSEKITPIAP (100 aa)) is regulatory. Positions 299 to 376 (TLIFTTGQEA…RFIKILGCYP (78 aa)) constitute an ACT domain.

The protein localises to the cytoplasm. It catalyses the reaction chorismate = prephenate. It carries out the reaction prephenate + H(+) = 3-phenylpyruvate + CO2 + H2O. It functions in the pathway amino-acid biosynthesis; L-phenylalanine biosynthesis; phenylpyruvate from prephenate: step 1/1. It participates in metabolic intermediate biosynthesis; prephenate biosynthesis; prephenate from chorismate: step 1/1. Functionally, catalyzes the Claisen rearrangement of chorismate to prephenate and the decarboxylation/dehydration of prephenate to phenylpyruvate. This is Bifunctional chorismate mutase/prephenate dehydratase (pheA) from Buchnera aphidicola subsp. Acyrthosiphon pisum (strain APS) (Acyrthosiphon pisum symbiotic bacterium).